The primary structure comprises 815 residues: Probable beta-glucosidase G (815 aa).

Residues 1 to 20 (MASIAHLVVSGLLAATAVNG) form the signal peptide. Asparagine 40, asparagine 58, asparagine 229, and asparagine 276 each carry an N-linked (GlcNAc...) asparagine glycan. The active site involves aspartate 304. N-linked (GlcNAc...) asparagine glycosylation is found at asparagine 343, asparagine 350, asparagine 402, asparagine 507, asparagine 563, asparagine 584, asparagine 623, asparagine 662, and asparagine 715.

It belongs to the glycosyl hydrolase 3 family.

It is found in the secreted. It carries out the reaction Hydrolysis of terminal, non-reducing beta-D-glucosyl residues with release of beta-D-glucose.. It functions in the pathway glycan metabolism; cellulose degradation. Its function is as follows. Beta-glucosidases are one of a number of cellulolytic enzymes involved in the degradation of cellulosic biomass. Catalyzes the last step releasing glucose from the inhibitory cellobiose. In Aspergillus flavus (strain ATCC 200026 / FGSC A1120 / IAM 13836 / NRRL 3357 / JCM 12722 / SRRC 167), this protein is Probable beta-glucosidase G (bglG).